Reading from the N-terminus, the 162-residue chain is RxLR effector protein PITG_06094 (162 aa).

The first 20 residues, 1 to 20 (MRLSFILAATLTGLLACATA), serve as a signal peptide directing secretion. The RxLR-dEER motif lies at 51–91 (RFLRAYNDAEDDSEDPKNVKNTVDAKPADESEDSELSEEER). Residues 56–88 (YNDAEDDSEDPKNVKNTVDAKPADESEDSELSE) form a disordered region.

The protein belongs to the RxLR effector family.

Its subcellular location is the secreted. It is found in the host cytoplasm. It localises to the host nucleus. The protein localises to the host nucleolus. Functionally, effector that enhances P.infestans colonization of Nicotiana benthamiana leaves. This is RxLR effector protein PITG_06094 from Phytophthora infestans (strain T30-4) (Potato late blight agent).